The sequence spans 494 residues: Glutamyl-tRNA(Gln) amidotransferase subunit A (494 aa).

Active-site charge relay system residues include lysine 78 and serine 158. Serine 182 (acyl-ester intermediate) is an active-site residue.

The protein belongs to the amidase family. GatA subfamily. Heterotrimer of A, B and C subunits.

It catalyses the reaction L-glutamyl-tRNA(Gln) + L-glutamine + ATP + H2O = L-glutaminyl-tRNA(Gln) + L-glutamate + ADP + phosphate + H(+). In terms of biological role, allows the formation of correctly charged Gln-tRNA(Gln) through the transamidation of misacylated Glu-tRNA(Gln) in organisms which lack glutaminyl-tRNA synthetase. The reaction takes place in the presence of glutamine and ATP through an activated gamma-phospho-Glu-tRNA(Gln). The chain is Glutamyl-tRNA(Gln) amidotransferase subunit A from Xanthobacter autotrophicus (strain ATCC BAA-1158 / Py2).